A 369-amino-acid chain; its full sequence is DNA replication and repair protein RecF (369 aa).

30–37 (GPNGSGKT) is an ATP binding site.

It belongs to the RecF family.

The protein resides in the cytoplasm. The RecF protein is involved in DNA metabolism; it is required for DNA replication and normal SOS inducibility. RecF binds preferentially to single-stranded, linear DNA. It also seems to bind ATP. The sequence is that of DNA replication and repair protein RecF from Chlorobium luteolum (strain DSM 273 / BCRC 81028 / 2530) (Pelodictyon luteolum).